Consider the following 548-residue polypeptide: Sterol esterase TGL1 (548 aa).

Met-1 carries the post-translational modification N-acetylmethionine; partial. The Lumenal segment spans residues 1 to 13 (MYFPFLGRLSITD). Residues 14-34 (YIIVVLVYIESIISSVLKLIP) traverse the membrane as a helical segment. The Cytoplasmic segment spans residues 35–548 (QPMINLFEWL…TTALDALNKE (514 aa)). The AB hydrolase-1 domain occupies 107–402 (VVYLHHGLLM…NYEHLDLIWG (296 aa)). A GXSXG motif is present at residues 199–203 (GFSQG). Ser-201 functions as the Nucleophile in the catalytic mechanism. Lys-246 participates in a covalent cross-link: Glycyl lysine isopeptide (Lys-Gly) (interchain with G-Cter in ubiquitin). Active-site charge relay system residues include Asp-369 and His-396. Disordered stretches follow at residues 449–477 (TTHPTHGLSYRTHSADRSPLSVQADEADE) and 496–516 (IDEDNENEHQDDTEDQIHKEQ). Phosphoserine is present on residues Ser-462 and Ser-466. Positions 502–516 (NEHQDDTEDQIHKEQ) are enriched in basic and acidic residues. Phosphoserine is present on residues Ser-521 and Ser-538. The disordered stretch occupies residues 528–548 (KDLRQLDANSSTTALDALNKE). At Thr-539 the chain carries Phosphothreonine.

This sequence belongs to the AB hydrolase superfamily. Not N-glycosylated.

Its subcellular location is the lipid droplet. The protein resides in the membrane. It carries out the reaction a sterol ester + H2O = a sterol + a fatty acid + H(+). Functionally, mediates the hydrolysis of steryl esters (SE). Preferentially hydrolyzes ergosteryl and zymosteryl esters. Required for mobilization of SEs from lipid particles/droplets, thereby playing a central role in lipid metabolism and sterol homeostasis. Sterol intermediates stored in SE and set free by SE hydrolases are recycled to the sterol biosynthetic pathway and converted to the final product, ergosterol, in the endoplasmic reticulum. Also has weak lipase activity toward triglycerides at neutral pH, however, the physiological relevance of this activity is unclear. The protein is Sterol esterase TGL1 (TGL1) of Saccharomyces cerevisiae (strain ATCC 204508 / S288c) (Baker's yeast).